Here is a 262-residue protein sequence, read N- to C-terminus: Ribosomal RNA small subunit methyltransferase A (262 aa).

S-adenosyl-L-methionine contacts are provided by His16, Leu18, Gly43, Glu64, Asp89, and Asn109.

The protein belongs to the class I-like SAM-binding methyltransferase superfamily. rRNA adenine N(6)-methyltransferase family. RsmA subfamily.

The protein localises to the cytoplasm. It catalyses the reaction adenosine(1518)/adenosine(1519) in 16S rRNA + 4 S-adenosyl-L-methionine = N(6)-dimethyladenosine(1518)/N(6)-dimethyladenosine(1519) in 16S rRNA + 4 S-adenosyl-L-homocysteine + 4 H(+). In terms of biological role, specifically dimethylates two adjacent adenosines (A1518 and A1519) in the loop of a conserved hairpin near the 3'-end of 16S rRNA in the 30S particle. May play a critical role in biogenesis of 30S subunits. In Xanthomonas euvesicatoria pv. vesicatoria (strain 85-10) (Xanthomonas campestris pv. vesicatoria), this protein is Ribosomal RNA small subunit methyltransferase A.